We begin with the raw amino-acid sequence, 214 residues long: RNA pyrophosphohydrolase (214 aa).

The Nudix hydrolase domain maps to 6 to 149 (GFRPNVGIIL…KRDVYQLALT (144 aa)). The Nudix box signature appears at 38-59 (GGIKYGETPMQAMYRELHEETG).

It belongs to the Nudix hydrolase family. RppH subfamily. A divalent metal cation serves as cofactor.

Accelerates the degradation of transcripts by removing pyrophosphate from the 5'-end of triphosphorylated RNA, leading to a more labile monophosphorylated state that can stimulate subsequent ribonuclease cleavage. In Burkholderia cenocepacia (strain HI2424), this protein is RNA pyrophosphohydrolase.